We begin with the raw amino-acid sequence, 146 residues long: Phage-like element PBSX protein XkdJ (146 aa).

It to B.subtilis YqbJ.

This chain is Phage-like element PBSX protein XkdJ (xkdJ), found in Bacillus subtilis (strain 168).